Consider the following 207-residue polypeptide: Transcriptional regulator YqjI (207 aa).

Residues 1-40 (MSHHHEGCCKHEGQPRHEGCCKGEKSEHEHCGHGHQHEHG) are compositionally biased toward basic and acidic residues. Positions 1–46 (MSHHHEGCCKHEGQPRHEGCCKGEKSEHEHCGHGHQHEHGQCCGGR) are disordered.

As to quaternary structure, oligomer (probable predominant form) and monomer.

Divalent metals such as nickel and iron have a similar negative effect on YqjI DNA-binding activity. Its function is as follows. Represses the expression of YqjH which is involved in iron homeostasis under excess nickel conditions. Also represses its own expression. The protein is Transcriptional regulator YqjI (yqjI) of Escherichia coli (strain K12).